The sequence spans 225 residues: Phosphoribosylformylglycinamidine synthase subunit PurQ (225 aa).

Positions 5–225 constitute a Glutamine amidotransferase type-1 domain; that stretch reads SAVITFPGSN…ESVVRGLVEA (221 aa). The Nucleophile role is filled by Cys-89. Catalysis depends on residues His-197 and Glu-199.

Part of the FGAM synthase complex composed of 1 PurL, 1 PurQ and 2 PurS subunits.

It is found in the cytoplasm. It carries out the reaction N(2)-formyl-N(1)-(5-phospho-beta-D-ribosyl)glycinamide + L-glutamine + ATP + H2O = 2-formamido-N(1)-(5-O-phospho-beta-D-ribosyl)acetamidine + L-glutamate + ADP + phosphate + H(+). It catalyses the reaction L-glutamine + H2O = L-glutamate + NH4(+). It functions in the pathway purine metabolism; IMP biosynthesis via de novo pathway; 5-amino-1-(5-phospho-D-ribosyl)imidazole from N(2)-formyl-N(1)-(5-phospho-D-ribosyl)glycinamide: step 1/2. Its function is as follows. Part of the phosphoribosylformylglycinamidine synthase complex involved in the purines biosynthetic pathway. Catalyzes the ATP-dependent conversion of formylglycinamide ribonucleotide (FGAR) and glutamine to yield formylglycinamidine ribonucleotide (FGAM) and glutamate. The FGAM synthase complex is composed of three subunits. PurQ produces an ammonia molecule by converting glutamine to glutamate. PurL transfers the ammonia molecule to FGAR to form FGAM in an ATP-dependent manner. PurS interacts with PurQ and PurL and is thought to assist in the transfer of the ammonia molecule from PurQ to PurL. This is Phosphoribosylformylglycinamidine synthase subunit PurQ from Novosphingobium aromaticivorans (strain ATCC 700278 / DSM 12444 / CCUG 56034 / CIP 105152 / NBRC 16084 / F199).